The primary structure comprises 226 residues: MLSMFMCNNIVDYVDDIDNGIVQDIEDEASNNVDRDYVYPLPENMVYRFDKSTNILDYLSTERDHVMMAVRYYMSKQRLDDLYRQLPTKTRSYIDIINIYCDKVSNDYNRDMNIMYDMASTKSFTVYDINNEVNTILMDNKGLGVRLATISFITELGRRCMNPVKTIKMFTLLSHTICDDCFVDYITDISPPDNTIPNTSTREYLKLIGITAIMFATYKTLKYMIG.

This sequence belongs to the orthopoxvirus OPG045 family. Homodimer. Interacts with host pro-apoptotic protein BCL2L11 (via BH3 domain). Interacts with host NLRP1. Interacts with host BAK.

It localises to the host mitochondrion outer membrane. Its subcellular location is the host cytoplasm. Its function is as follows. Plays a role in evading host innate immune response by inhibiting host inflammasome activation. Interacts with and inhibits NLR-mediated interleukin-1 beta/IL1B production in infected cells. At the host mitochondria outer membrane, interacts with the BH3 domain of host BAK and prevents BAK from binding active BAX. In turn, host apoptosis is inhibited. This is Apoptosis regulator OPG045 (OPG045) from Homo sapiens (Human).